A 1492-amino-acid chain; its full sequence is Copper-transporting ATPase 1 (1492 aa).

The Cytoplasmic portion of the chain corresponds to 1–645 (MEPNMDANSI…KREIKQWRGS (645 aa)). HMA domains are found at residues 8 to 74 (NSIT…FDAL) and 85 to 151 (TNTV…LDMG). Residues Thr-18, Cys-19, and Cys-22 each coordinate Cu(+). Position 152 is a phosphothreonine (Thr-152). In terms of domain architecture, HMA 3 spans 171-237 (VLLKMRVEGM…QIEAVGFPAF (67 aa)). Cys-182 and Cys-185 together coordinate Cu(+). At Ser-270 the chain carries Phosphoserine. The HMA 4 domain maps to 277-343 (SAITFTIDGM…AIEAVSPGQY (67 aa)). Residues Cys-288 and Cys-291 each contribute to the Cu(+) site. Thr-327 carries the post-translational modification Phosphothreonine. Residues Ser-339, Ser-353, Ser-357, and Ser-362 each carry the phosphoserine modification. HMA domains are found at residues 377-443 (QEVV…FDAV), 480-546 (NKCY…FGAV), and 556-622 (GILE…FEAS). Cu(+) contacts are provided by Cys-388, Cys-391, Cys-491, Cys-494, Cys-567, and Cys-570. A helical transmembrane segment spans residues 646–667 (FLVSLFFCIPVMGLMIYMMVMD). At 668 to 706 (HHLATLNHNQNMSNEEMINMHSSMFLERQILPGLSIMNL) the chain is on the extracellular side. Residue Asn-678 is glycosylated (N-linked (GlcNAc...) asparagine). Residues 707–726 (LSLLLCLPVQFCGGWYFYIQ) traverse the membrane as a helical segment. Residues 727–733 (AYKALRH) are Cytoplasmic-facing. The helical transmembrane segment at 734-754 (KTANMDVLIVLATTIAFAYSL) threads the bilayer. Residues 755–773 (VILLVAMYERAKVNPITFF) are Extracellular-facing. A helical transmembrane segment spans residues 774–794 (DTPPMLFVFIALGRWLEHIAK). Over 795-927 (GKTSEALAKL…SKAPIQQFAD (133 aa)) the chain is Cytoplasmic. Residues 928–951 (KLSGYFVPFIVLVSIVTLLVWIII) traverse the membrane as a helical segment. The Extracellular portion of the chain corresponds to 952–981 (GFQNFEIVEAYFPGYNRSISRTETIIRFAF). A helical membrane pass occupies residues 982–1003 (QASITVLCIACPCSLGLATPTA). The Cytoplasmic portion of the chain corresponds to 1004-1348 (VMVGTGVGAQ…LSRKTVKRIR (345 aa)). Asp-1036 serves as the catalytic 4-aspartylphosphate intermediate. Glu-1073 serves as a coordination point for ATP. Thr-1204 is modified (phosphothreonine). Positions 1293 and 1297 each coordinate Mg(2+). The helical transmembrane segment at 1349–1366 (INFVFALIYNLIGIPIAA) threads the bilayer. The Extracellular segment spans residues 1367-1377 (GVFLPIGLVLQ). A helical membrane pass occupies residues 1378 to 1397 (PWMGSAAMAASSVSVVLSSL). Topologically, residues 1398–1492 (FLKLYRKPTY…DFREDDDTTL (95 aa)) are cytoplasmic. Phosphoserine occurs at positions 1422, 1424, 1452, 1455, and 1458. Positions 1459 to 1460 (LL) match the Endocytosis signal motif. Phosphoserine is present on residues Ser-1461, Ser-1465, Ser-1468, and Ser-1478. The interval 1478 to 1492 (SLLVGDFREDDDTTL) is PDZD11-binding. Positions 1479-1480 (LL) match the Endocytosis signal motif.

It belongs to the cation transport ATPase (P-type) (TC 3.A.3) family. Type IB subfamily. In terms of assembly, monomer. Interacts with PDZD11. Interacts with ATOX1 and COMMD1. Interacts with TYRP1. Directly interacts with SOD3; this interaction is copper-dependent and is required for SOD3 activity. Expressed in hippocampal neuron (at protein level). Expressed in anterior pituitary gland (at protein level).

It is found in the golgi apparatus. Its subcellular location is the trans-Golgi network membrane. The protein resides in the cell membrane. The protein localises to the melanosome membrane. It localises to the early endosome membrane. It is found in the cell projection. Its subcellular location is the axon. The protein resides in the dendrite. The protein localises to the postsynaptic density. It carries out the reaction Cu(+)(in) + ATP + H2O = Cu(+)(out) + ADP + phosphate + H(+). In terms of biological role, ATP-driven copper (Cu(+)) ion pump that plays an important role in intracellular copper ion homeostasis. Within a catalytic cycle, acquires Cu(+) ion from donor protein on the cytoplasmic side of the membrane and delivers it to acceptor protein on the lumenal side. The transfer of Cu(+) ion across the membrane is coupled to ATP hydrolysis and is associated with a transient phosphorylation that shifts the pump conformation from inward-facing to outward-facing state. Under physiological conditions, at low cytosolic copper concentration, it is localized at the trans-Golgi network (TGN) where it transfers Cu(+) ions to cuproenzymes of the secretory pathway. Upon elevated cytosolic copper concentrations, it relocalizes to the plasma membrane where it is responsible for the export of excess Cu(+) ions. May play a dual role in neuron function and survival by regulating cooper efflux and neuronal transmission at the synapse as well as by supplying Cu(+) ions to enzymes such as PAM, TYR and SOD3. In the melanosomes of pigmented cells, provides copper cofactor to TYR to form an active TYR holoenzyme for melanin biosynthesis. This Rattus norvegicus (Rat) protein is Copper-transporting ATPase 1.